Consider the following 241-residue polypeptide: Leucyl/phenylalanyl-tRNA--protein transferase (241 aa).

It belongs to the L/F-transferase family.

The protein localises to the cytoplasm. The catalysed reaction is N-terminal L-lysyl-[protein] + L-leucyl-tRNA(Leu) = N-terminal L-leucyl-L-lysyl-[protein] + tRNA(Leu) + H(+). The enzyme catalyses N-terminal L-arginyl-[protein] + L-leucyl-tRNA(Leu) = N-terminal L-leucyl-L-arginyl-[protein] + tRNA(Leu) + H(+). It carries out the reaction L-phenylalanyl-tRNA(Phe) + an N-terminal L-alpha-aminoacyl-[protein] = an N-terminal L-phenylalanyl-L-alpha-aminoacyl-[protein] + tRNA(Phe). Functionally, functions in the N-end rule pathway of protein degradation where it conjugates Leu, Phe and, less efficiently, Met from aminoacyl-tRNAs to the N-termini of proteins containing an N-terminal arginine or lysine. This chain is Leucyl/phenylalanyl-tRNA--protein transferase, found in Neisseria meningitidis serogroup C / serotype 2a (strain ATCC 700532 / DSM 15464 / FAM18).